Consider the following 77-residue polypeptide: Small ribosomal subunit protein bS21 (77 aa).

It belongs to the bacterial ribosomal protein bS21 family.

The protein is Small ribosomal subunit protein bS21 of Bartonella tribocorum (strain CIP 105476 / IBS 506).